A 118-amino-acid chain; its full sequence is Protein TusC (118 aa).

The protein belongs to the DsrF/TusC family. Heterohexamer, formed by a dimer of trimers. The hexameric TusBCD complex contains 2 copies each of TusB, TusC and TusD. The TusBCD complex interacts with TusE.

Its subcellular location is the cytoplasm. Its function is as follows. Part of a sulfur-relay system required for 2-thiolation of 5-methylaminomethyl-2-thiouridine (mnm(5)s(2)U) at tRNA wobble positions. The polypeptide is Protein TusC (Salmonella gallinarum (strain 287/91 / NCTC 13346)).